Here is a 53-residue protein sequence, read N- to C-terminus: Reg12l (53 aa).

A propeptide spanning residues 1–34 (RVLFRSGDQPADQPAERMQDISPEQNPLFHPDKR) is cleaved from the precursor. 3 disulfide bridges follow: cysteine 36-cysteine 50, cysteine 37-cysteine 48, and cysteine 42-cysteine 51.

Belongs to the conotoxin M superfamily. As to expression, expressed by the venom duct.

It is found in the secreted. This Conus regius (Crown cone) protein is Reg12l.